Consider the following 271-residue polypeptide: Tetraspanin-11 (271 aa).

Residues M1–F7 are Cytoplasmic-facing. A helical membrane pass occupies residues M8–I28. The Extracellular portion of the chain corresponds to Y29–R44. A helical membrane pass occupies residues I45 to S65. Over C66 to Y76 the chain is Cytoplasmic. The chain crosses the membrane as a helical span at residues L77–V97. Residues T98–N236 lie on the Extracellular side of the membrane. 2 N-linked (GlcNAc...) asparagine glycosylation sites follow: N185 and N195. A helical membrane pass occupies residues L237–C257. At A258–V271 the chain is on the cytoplasmic side.

Belongs to the tetraspanin (TM4SF) family.

It is found in the membrane. In terms of biological role, may be involved in the regulation of cell differentiation. The sequence is that of Tetraspanin-11 (TET11) from Arabidopsis thaliana (Mouse-ear cress).